The sequence spans 295 residues: Protein shisa-2 homolog (295 aa).

The N-terminal stretch at 1 to 33 is a signal peptide; the sequence is MWGARRSSVSSSWNAASLLQLLLAALLAAGARA. Residues 34-110 are Extracellular-facing; sequence SGEYCHGWLD…RADKDGPDGS (77 aa). The segment at 87–108 is disordered; that stretch reads GCDNDRQQGAGEPGRADKDGPD. A helical transmembrane segment spans residues 111 to 131; that stretch reads AVPIYVPFLIVGSVFVAFIIL. Residues 132 to 295 lie on the Cytoplasmic side of the membrane; that stretch reads GSLVAACCCR…EQKMYPAVTV (164 aa). Residues 168–205 are disordered; it reads PSASTSRGSSSRQSSTAASSSSSANSGARAPPTRSQTN. A compositionally biased stretch (low complexity) spans 169–197; that stretch reads SASTSRGSSSRQSSTAASSSSSANSGARA.

Belongs to the shisa family.

The protein localises to the endoplasmic reticulum membrane. Its function is as follows. Plays an essential role in the maturation of presomitic mesoderm cells by individual attenuation of both FGF and WNT signaling. This chain is Protein shisa-2 homolog (SHISA2), found in Homo sapiens (Human).